Consider the following 174-residue polypeptide: Shikimate kinase (174 aa).

15–20 (GTGKST) contributes to the ATP binding site. Ser-19 provides a ligand contact to Mg(2+). Residues Asp-37, Arg-61, and Gly-82 each coordinate substrate. Arg-120 is an ATP binding site. Arg-138 is a binding site for substrate.

It belongs to the shikimate kinase family. In terms of assembly, monomer. Mg(2+) is required as a cofactor.

The protein localises to the cytoplasm. It catalyses the reaction shikimate + ATP = 3-phosphoshikimate + ADP + H(+). It participates in metabolic intermediate biosynthesis; chorismate biosynthesis; chorismate from D-erythrose 4-phosphate and phosphoenolpyruvate: step 5/7. Its function is as follows. Catalyzes the specific phosphorylation of the 3-hydroxyl group of shikimic acid using ATP as a cosubstrate. This is Shikimate kinase from Staphylococcus aureus (strain MRSA252).